The primary structure comprises 260 residues: Global transcriptional regulator CodY (260 aa).

Positions 1-159 (MPNLLEKTRK…SSTVVGIQLL (159 aa)) are GAF domain. Residues 207 to 226 (ASVIADRIGITRSVIVNALR) constitute a DNA-binding region (H-T-H motif).

Belongs to the CodY family.

It localises to the cytoplasm. DNA-binding global transcriptional regulator which is involved in the adaptive response to starvation and acts by directly or indirectly controlling the expression of numerous genes in response to nutrient availability. During rapid exponential growth, CodY is highly active and represses genes whose products allow adaptation to nutrient depletion. This Streptococcus pyogenes serotype M1 protein is Global transcriptional regulator CodY.